A 348-amino-acid chain; its full sequence is Probable dual-specificity RNA methyltransferase RlmN (348 aa).

Catalysis depends on E93, which acts as the Proton acceptor. Positions 99-323 constitute a Radical SAM core domain; that stretch reads TEKRLTACLS…QTRLSNSGIN (225 aa). C106 and C338 form a disulfide bridge. Residues C113, C117, and C120 each contribute to the [4Fe-4S] cluster site. Residues 160–161, S190, 219–221, and N295 contribute to the S-adenosyl-L-methionine site; these read GE and SLH. C338 acts as the S-methylcysteine intermediate in catalysis.

Belongs to the radical SAM superfamily. RlmN family. [4Fe-4S] cluster is required as a cofactor.

The protein resides in the cytoplasm. The catalysed reaction is adenosine(2503) in 23S rRNA + 2 reduced [2Fe-2S]-[ferredoxin] + 2 S-adenosyl-L-methionine = 2-methyladenosine(2503) in 23S rRNA + 5'-deoxyadenosine + L-methionine + 2 oxidized [2Fe-2S]-[ferredoxin] + S-adenosyl-L-homocysteine. The enzyme catalyses adenosine(37) in tRNA + 2 reduced [2Fe-2S]-[ferredoxin] + 2 S-adenosyl-L-methionine = 2-methyladenosine(37) in tRNA + 5'-deoxyadenosine + L-methionine + 2 oxidized [2Fe-2S]-[ferredoxin] + S-adenosyl-L-homocysteine. Its function is as follows. Specifically methylates position 2 of adenine 2503 in 23S rRNA and position 2 of adenine 37 in tRNAs. The chain is Probable dual-specificity RNA methyltransferase RlmN from Prochlorococcus marinus subsp. pastoris (strain CCMP1986 / NIES-2087 / MED4).